Reading from the N-terminus, the 68-residue chain is DNA-directed RNA polymerase subunit omega (68 aa).

Belongs to the RNA polymerase subunit omega family. As to quaternary structure, the RNAP catalytic core consists of 2 alpha, 1 beta, 1 beta' and 1 omega subunit. When a sigma factor is associated with the core the holoenzyme is formed, which can initiate transcription.

The enzyme catalyses RNA(n) + a ribonucleoside 5'-triphosphate = RNA(n+1) + diphosphate. Its function is as follows. Promotes RNA polymerase assembly. Latches the N- and C-terminal regions of the beta' subunit thereby facilitating its interaction with the beta and alpha subunits. This is DNA-directed RNA polymerase subunit omega from Chromobacterium violaceum (strain ATCC 12472 / DSM 30191 / JCM 1249 / CCUG 213 / NBRC 12614 / NCIMB 9131 / NCTC 9757 / MK).